The sequence spans 480 residues: Probable WRKY transcription factor 61 (480 aa).

Residues 30–108 (NQLMAKHNEP…RNYDDNEKSS (79 aa)) form a disordered region. 2 stretches are compositionally biased toward basic and acidic residues: residues 57 to 66 (REKVNEREEL) and 84 to 106 (NKEE…DNEK). A DNA-binding region (WRKY) is located at residues 185 to 251 (CETPTMNDGC…YEGTHNHPLP (67 aa)).

It localises to the nucleus. In terms of biological role, transcription factor. Interacts specifically with the W box (5'-(T)TGAC[CT]-3'), a frequently occurring elicitor-responsive cis-acting element. The polypeptide is Probable WRKY transcription factor 61 (WRKY61) (Arabidopsis thaliana (Mouse-ear cress)).